The chain runs to 179 residues: uncharacterized protein (179 aa).

The next 3 helical transmembrane spans lie at 29 to 49 (LLGI…GPLI), 76 to 96 (AKHM…DAYS), and 97 to 117 (GAII…LLWA).

The protein belongs to the DP1 family.

It is found in the membrane. This is an uncharacterized protein from Encephalitozoon cuniculi (strain GB-M1) (Microsporidian parasite).